Consider the following 511-residue polypeptide: Probable DNA ligase (511 aa).

Glu209 lines the ATP pocket. Residue Lys211 is the N6-AMP-lysine intermediate of the active site. Arg216, Arg231, Glu260, Phe299, Arg371, and Lys377 together coordinate ATP.

This sequence belongs to the ATP-dependent DNA ligase family. It depends on Mg(2+) as a cofactor.

The catalysed reaction is ATP + (deoxyribonucleotide)n-3'-hydroxyl + 5'-phospho-(deoxyribonucleotide)m = (deoxyribonucleotide)n+m + AMP + diphosphate.. Functionally, DNA ligase that seals nicks in double-stranded DNA during DNA replication, DNA recombination and DNA repair. The protein is Probable DNA ligase of Mycolicibacterium gilvum (strain PYR-GCK) (Mycobacterium gilvum (strain PYR-GCK)).